The sequence spans 283 residues: Probable endonuclease 4 (283 aa).

Residues histidine 66, histidine 106, glutamate 141, aspartate 174, histidine 177, histidine 211, aspartate 224, histidine 226, and glutamate 256 each coordinate Zn(2+).

It belongs to the AP endonuclease 2 family. It depends on Zn(2+) as a cofactor.

The catalysed reaction is Endonucleolytic cleavage to 5'-phosphooligonucleotide end-products.. Functionally, endonuclease IV plays a role in DNA repair. It cleaves phosphodiester bonds at apurinic or apyrimidinic (AP) sites, generating a 3'-hydroxyl group and a 5'-terminal sugar phosphate. This Carboxydothermus hydrogenoformans (strain ATCC BAA-161 / DSM 6008 / Z-2901) protein is Probable endonuclease 4.